Consider the following 337-residue polypeptide: tRNA N6-adenosine threonylcarbamoyltransferase (337 aa).

Fe cation is bound by residues histidine 110 and histidine 114. Substrate contacts are provided by residues methionine 133–glycine 137, aspartate 166, glycine 179, aspartate 183, and asparagine 276. Aspartate 302 contacts Fe cation.

The protein belongs to the KAE1 / TsaD family. Fe(2+) is required as a cofactor.

The protein resides in the cytoplasm. The catalysed reaction is L-threonylcarbamoyladenylate + adenosine(37) in tRNA = N(6)-L-threonylcarbamoyladenosine(37) in tRNA + AMP + H(+). Functionally, required for the formation of a threonylcarbamoyl group on adenosine at position 37 (t(6)A37) in tRNAs that read codons beginning with adenine. Is involved in the transfer of the threonylcarbamoyl moiety of threonylcarbamoyl-AMP (TC-AMP) to the N6 group of A37, together with TsaE and TsaB. TsaD likely plays a direct catalytic role in this reaction. The polypeptide is tRNA N6-adenosine threonylcarbamoyltransferase (Fervidobacterium nodosum (strain ATCC 35602 / DSM 5306 / Rt17-B1)).